The chain runs to 288 residues: Histone H3-like centromeric protein hcp-3 (288 aa).

Residues 96-194 are disordered; sequence YHARKEQARR…VTKTRRYRPG (99 aa). Over residues 178–193 the composition is skewed to basic residues; sequence MRAGRNRVTKTRRYRP. Residues 191 to 288 form an H3-like region; that stretch reads YRPGQKALEE…LYRRLCLRHL (98 aa).

The protein belongs to the histone H3 family. As to quaternary structure, forms a nucleosome-like histone octamer containing two molecules each of H2A, H2B, hcp-3 and H4 assembled in one hcp-3-H4 heterotetramer and two H2A-H2B heterodimers. The hcp-3-H4 heterotetramer is more compact and structurally more rigid than corresponding H3-H4 heterotetramers. Interacts with knl-2. Interacts with lin-53.

It is found in the nucleus. The protein resides in the chromosome. Its subcellular location is the centromere. It localises to the kinetochore. Histone H3-like variant which exclusively replaces conventional H3 in the nucleosome core of centromeric chromatin at the inner plate of the kinetochore. Required for recruitment and assembly of kinetochore proteins, mitotic progression and chromosome segregation. May serve as an epigenetic mark that propagates centromere identity through replication and cell division. Might promote cleavage furrow stability during cytokinesis. Not required for chromosome segregation during meiosis. The sequence is that of Histone H3-like centromeric protein hcp-3 from Caenorhabditis elegans.